Consider the following 83-residue polypeptide: Exodeoxyribonuclease 7 small subunit (83 aa).

This sequence belongs to the XseB family. As to quaternary structure, heterooligomer composed of large and small subunits.

The protein resides in the cytoplasm. It catalyses the reaction Exonucleolytic cleavage in either 5'- to 3'- or 3'- to 5'-direction to yield nucleoside 5'-phosphates.. Its function is as follows. Bidirectionally degrades single-stranded DNA into large acid-insoluble oligonucleotides, which are then degraded further into small acid-soluble oligonucleotides. The sequence is that of Exodeoxyribonuclease 7 small subunit from Bradyrhizobium sp. (strain BTAi1 / ATCC BAA-1182).